The sequence spans 659 residues: ATP-binding cassette sub-family D member 3 (659 aa).

An interaction with PEX19 region spans residues 1–61; the sequence is MAAFSKYLTA…GKKERAVVDK (61 aa). N12 carries N-linked (GlcNAc...) asparagine glycosylation. K61 is subject to N6-acetyllysine. A helical membrane pass occupies residues 84 to 104; it reads GYLVLIAVMLVSRTYCDVWMI. One can recognise an ABC transmembrane type-1 domain in the interval 85-372; the sequence is YLVLIAVMLV…MLLRMSQALG (288 aa). A glycan (N-linked (GlcNAc...) asparagine) is linked at N106. A helical membrane pass occupies residues 126-146; the sequence is LLNFIAAMPLISLVNNFLKYG. A glycan (N-linked (GlcNAc...) asparagine) is linked at N206. The helical transmembrane segment at 224–244 threads the bilayer; it reads AIGAQGPASMMAYLVVSGLFL. Residue K260 is modified to N6-acetyllysine. Residues 313 to 333 traverse the membrane as a helical segment; that stretch reads MGFIDSIIAKYLATVVGYLVV. Residue K399 is modified to N6-acetyllysine. The ABC transporter domain maps to 440 to 659; it reads IKFDHVPLAT…ITEDTVEFGS (220 aa). Residue 473 to 480 participates in ATP binding; it reads GPNGCGKS. K533 is modified (N6-acetyllysine). A Phosphoserine modification is found at S659.

Belongs to the ABC transporter superfamily. ABCD family. Peroxisomal fatty acyl CoA transporter (TC 3.A.1.203) subfamily. Homodimers. Can form heterodimers with ABCD1 and ABCD2. Dimerization is necessary to form an active transporter. Interacts with PEX19; mediates the targeting of ABCD3 to peroxisomes. Post-translationally, ubiquitinated by PEX2 during pexophagy in response to starvation, leading to its degradation.

The protein resides in the peroxisome membrane. The enzyme catalyses a very long-chain fatty acyl-CoA + H2O = a very long-chain fatty acid + CoA + H(+). It catalyses the reaction a very long-chain fatty acid(in) + ATP + H2O = a very long-chain fatty acid(out) + ADP + phosphate + H(+). It carries out the reaction a long-chain fatty acyl-CoA + H2O = a long-chain fatty acid + CoA + H(+). The catalysed reaction is a long-chain fatty acid(in) + ATP + H2O = a long-chain fatty acid(out) + ADP + phosphate + H(+). The enzyme catalyses pristanoyl-CoA + H2O = 2,6,10,14-tetramethylpentadecanoate + CoA + H(+). It catalyses the reaction 2,6,10,14-tetramethylpentadecanoate(in) + ATP + H2O = 2,6,10,14-tetramethylpentadecanoate(out) + ADP + phosphate + H(+). It carries out the reaction hexadecanedioyl-CoA + H2O = hexadecanedioate + CoA + H(+). The catalysed reaction is hexadecanedioate(in) + ATP + H2O = hexadecanedioate(out) + ADP + phosphate + H(+). The enzyme catalyses (5Z,8Z,11Z,14Z,17Z)-eicosapentaenoyl-CoA + H2O = (5Z,8Z,11Z,14Z,17Z)-eicosapentaenoate + CoA + H(+). It catalyses the reaction (5Z,8Z,11Z,14Z,17Z)-eicosapentaenoate(in) + ATP + H2O = (5Z,8Z,11Z,14Z,17Z)-eicosapentaenoate(out) + ADP + phosphate + H(+). It carries out the reaction (4Z,7Z,10Z,13Z,16Z,19Z)-docosahexaenoyl-CoA + H2O = (4Z,7Z,10Z,13Z,16Z,19Z)-docosahexaenoate + CoA + H(+). The catalysed reaction is (4Z,7Z,10Z,13Z,16Z,19Z)-docosahexaenoate(in) + ATP + H2O = (4Z,7Z,10Z,13Z,16Z,19Z)-docosahexaenoate(out) + ADP + phosphate + H(+). Broad substrate specificity ATP-dependent transporter of the ATP-binding cassette (ABC) family that catalyzes the transport of long-chain fatty acids (LCFA)-CoA, dicarboxylic acids-CoA, long-branched-chain fatty acids-CoA and bile acids from the cytosol to the peroxisome lumen for beta-oxydation. Has fatty acyl-CoA thioesterase and ATPase activities. Probably hydrolyzes fatty acyl-CoAs into free fatty acids prior to their ATP-dependent transport into peroxisomes. Thus, play a role in regulation of LCFAs and energy metabolism namely, in the degradation and biosynthesis of fatty acids by beta-oxidation. The sequence is that of ATP-binding cassette sub-family D member 3 from Homo sapiens (Human).